The sequence spans 271 residues: Virulence regulon transcriptional activator VirF (271 aa).

Residues 167–265 (ERLQKFMEEN…GCTPSQARLT (99 aa)) form the HTH araC/xylS-type domain. 2 DNA-binding regions (H-T-H motif) span residues 184-205 (SKFAREFGMGLTTFKELFGTVY) and 232-255 (IVDIAMEAGFSSQSYFTQSYRRRF).

Functionally, transcriptional activator of the Yersinia virulence regulon. This is Virulence regulon transcriptional activator VirF (virF) from Yersinia enterocolitica.